We begin with the raw amino-acid sequence, 243 residues long: 3-deoxy-manno-octulosonate cytidylyltransferase (243 aa).

Belongs to the KdsB family.

It is found in the cytoplasm. It catalyses the reaction 3-deoxy-alpha-D-manno-oct-2-ulosonate + CTP = CMP-3-deoxy-beta-D-manno-octulosonate + diphosphate. The protein operates within nucleotide-sugar biosynthesis; CMP-3-deoxy-D-manno-octulosonate biosynthesis; CMP-3-deoxy-D-manno-octulosonate from 3-deoxy-D-manno-octulosonate and CTP: step 1/1. It functions in the pathway bacterial outer membrane biogenesis; lipopolysaccharide biosynthesis. Its function is as follows. Activates KDO (a required 8-carbon sugar) for incorporation into bacterial lipopolysaccharide in Gram-negative bacteria. This Bartonella henselae (strain ATCC 49882 / DSM 28221 / CCUG 30454 / Houston 1) (Rochalimaea henselae) protein is 3-deoxy-manno-octulosonate cytidylyltransferase.